A 314-amino-acid chain; its full sequence is Probable carboxylesterase 2 (314 aa).

The Involved in the stabilization of the negatively charged intermediate by the formation of the oxyanion hole motif lies at 79–81; the sequence is HGG. Residues Ser-158, Asp-254, and His-286 contribute to the active site.

The protein belongs to the 'GDXG' lipolytic enzyme family. In terms of tissue distribution, expressed in roots and flowers.

It catalyses the reaction a carboxylic ester + H2O = an alcohol + a carboxylate + H(+). Functionally, carboxylesterase acting on esters with varying acyl chain length. In Arabidopsis thaliana (Mouse-ear cress), this protein is Probable carboxylesterase 2 (CXE2).